The following is a 270-amino-acid chain: Sugar phosphatase YidA (270 aa).

The active-site Nucleophile is D9. D9 contributes to the Mg(2+) binding site. Residue M10 participates in phosphate binding. D11 is a binding site for Mg(2+). Phosphate is bound by residues 43 to 44 and K197; that span reads TG. D220 contributes to the Mg(2+) binding site. N223 provides a ligand contact to phosphate.

The protein belongs to the HAD-like hydrolase superfamily. Cof family. In terms of assembly, homodimer. It depends on Mg(2+) as a cofactor.

It catalyses the reaction sugar phosphate + H2O = sugar + phosphate.. Its function is as follows. Catalyzes the dephosphorylation of different sugar phosphates. This chain is Sugar phosphatase YidA (yidA), found in Escherichia coli O6:H1 (strain CFT073 / ATCC 700928 / UPEC).